The chain runs to 568 residues: Urease subunit alpha (568 aa).

Positions 133–568 (GGLDIHIHFN…ELPLAQRYLL (436 aa)) constitute a Urease domain. Residues His138, His140, and Lys217 each coordinate Ni(2+). Lys217 bears the N6-carboxylysine mark. Residue His219 coordinates substrate. Ni(2+) is bound by residues His246 and His272. His320 (proton donor) is an active-site residue. Position 360 (Asp360) interacts with Ni(2+).

The protein belongs to the metallo-dependent hydrolases superfamily. Urease alpha subunit family. Heterotrimer of UreA (gamma), UreB (beta) and UreC (alpha) subunits. Three heterotrimers associate to form the active enzyme. The cofactor is Ni cation. Carboxylation allows a single lysine to coordinate two nickel ions.

Its subcellular location is the cytoplasm. The catalysed reaction is urea + 2 H2O + H(+) = hydrogencarbonate + 2 NH4(+). It functions in the pathway nitrogen metabolism; urea degradation; CO(2) and NH(3) from urea (urease route): step 1/1. The polypeptide is Urease subunit alpha (Haloarcula marismortui (strain ATCC 43049 / DSM 3752 / JCM 8966 / VKM B-1809) (Halobacterium marismortui)).